A 1024-amino-acid polypeptide reads, in one-letter code: Carbamoyl phosphate synthase large chain (1024 aa).

A carboxyphosphate synthetic domain region spans residues 1-396; it reads MDIKKILVIG…AWQKAVRMID (396 aa). Positions 125, 165, 171, 172, 204, 206, 211, 237, 238, 239, 280, and 294 each coordinate ATP. Residues 129 to 323 form the ATP-grasp 1 domain; that stretch reads QKAMREAGIP…LAYIAAKLAL (195 aa). Mg(2+) is bound by residues Gln280, Glu294, and Asn296. The Mn(2+) site is built by Gln280, Glu294, and Asn296. The interval 397 to 536 is oligomerization domain; it reads IGEPGLVGGP…LTYGGQYDDK (140 aa). The segment at 536-917 is carbamoyl phosphate synthetic domain; sequence KTPGVDYLVV…LKSWLSATPN (382 aa). The ATP-grasp 2 domain occupies 660–849; the sequence is SKLLDRLGIK…YMSLVADVLT (190 aa). Residues Arg696, Lys735, Glu742, Gly766, Val767, His768, Ser769, Gln809, and Glu820 each coordinate ATP. Gln809, Glu820, and Asn822 together coordinate Mg(2+). Residues Gln809, Glu820, and Asn822 each contribute to the Mn(2+) site. In terms of domain architecture, MGS-like spans 917-1024; it reads NKIPSKTALI…KNGKLEVAPW (108 aa). The tract at residues 918 to 1024 is allosteric domain; sequence KIPSKTALIY…KNGKLEVAPW (107 aa).

The protein belongs to the CarB family. In terms of assembly, composed of two chains; the small (or glutamine) chain promotes the hydrolysis of glutamine to ammonia, which is used by the large (or ammonia) chain to synthesize carbamoyl phosphate. Tetramer of heterodimers (alpha,beta)4. Mg(2+) serves as cofactor. The cofactor is Mn(2+).

It catalyses the reaction hydrogencarbonate + L-glutamine + 2 ATP + H2O = carbamoyl phosphate + L-glutamate + 2 ADP + phosphate + 2 H(+). It carries out the reaction hydrogencarbonate + NH4(+) + 2 ATP = carbamoyl phosphate + 2 ADP + phosphate + 2 H(+). It participates in amino-acid biosynthesis; L-arginine biosynthesis; carbamoyl phosphate from bicarbonate: step 1/1. Its pathway is pyrimidine metabolism; UMP biosynthesis via de novo pathway; (S)-dihydroorotate from bicarbonate: step 1/3. Its function is as follows. Large subunit of the glutamine-dependent carbamoyl phosphate synthetase (CPSase). CPSase catalyzes the formation of carbamoyl phosphate from the ammonia moiety of glutamine, carbonate, and phosphate donated by ATP, constituting the first step of 2 biosynthetic pathways, one leading to arginine and/or urea and the other to pyrimidine nucleotides. The large subunit (synthetase) binds the substrates ammonia (free or transferred from glutamine from the small subunit), hydrogencarbonate and ATP and carries out an ATP-coupled ligase reaction, activating hydrogencarbonate by forming carboxy phosphate which reacts with ammonia to form carbamoyl phosphate. In Pyrobaculum aerophilum (strain ATCC 51768 / DSM 7523 / JCM 9630 / CIP 104966 / NBRC 100827 / IM2), this protein is Carbamoyl phosphate synthase large chain.